A 324-amino-acid polypeptide reads, in one-letter code: Probable UDP-sugar transporter protein SLC35A4 (324 aa).

The Cytoplasmic segment spans residues 1–18 (MSVEDGGMPGLGRPRQAR). Residues 19–39 (WTLMLLLSTAMYGAHAPLLAL) form a helical membrane-spanning segment. The Lumenal portion of the chain corresponds to 40–52 (CHVDGRVPFRPSS). The helical transmembrane segment at 53–73 (AVLLTELTKLLLCAFSLLVGW) threads the bilayer. Topologically, residues 74-85 (QAWPQGPPPWRQ) are cytoplasmic. A helical transmembrane segment spans residues 86–106 (AAPFALSALLYGANNNLVIYL). Over 107-142 (QRYMDPSTYQVLSNLKIGSTAVLYCLCLRHRLSVRQ) the chain is Lumenal. The helical transmembrane segment at 143–163 (GLALLLLMAAGACYAAGGLQV) threads the bilayer. Residues 164–180 (PGNTLPSPPPAAAASPM) are Cytoplasmic-facing. The helical transmembrane segment at 181–201 (PLHITPLGLLLLILYCLISGL) threads the bilayer. The Lumenal portion of the chain corresponds to 202–214 (SSVYTELLMKRQR). Residues 215–235 (LPLALQNLFLYTFGVLLNLGL) traverse the membrane as a helical segment. The Cytoplasmic segment spans residues 236 to 250 (HAGGGSGPGLLEGFS). A helical membrane pass occupies residues 251-271 (GWAALVVLSQALNGLLMSAVM). Residues 272-275 (KHGS) are Lumenal-facing. The chain crosses the membrane as a helical span at residues 276 to 298 (SITRLFVVSCSLVVNAVLSAVLL). The Cytoplasmic portion of the chain corresponds to 299-324 (RLQLTAAFFLATLLIGLAMRLYYGSR).

Belongs to the nucleotide-sugar transporter family. SLC35A subfamily. As to quaternary structure, found in a complex with SLC35A2 and SLC35A3.

It localises to the golgi apparatus membrane. It carries out the reaction CDP-L-ribitol(in) + CDP(out) = CDP-L-ribitol(out) + CDP(in). Functionally, mediates the transport of CDP-ribitol. Does not exhibit CMP-sialic acid, UDP-galactose and UDP-N-acetylglucosamine transport activity. This chain is Probable UDP-sugar transporter protein SLC35A4, found in Homo sapiens (Human).